The primary structure comprises 338 residues: tRNA N6-adenosine threonylcarbamoyltransferase (338 aa).

H112 and H116 together coordinate Fe cation. Residues 135-139, D168, G181, and N273 each bind substrate; that span reads LVSGG. D301 serves as a coordination point for Fe cation.

This sequence belongs to the KAE1 / TsaD family. Requires Fe(2+) as cofactor.

It is found in the cytoplasm. It catalyses the reaction L-threonylcarbamoyladenylate + adenosine(37) in tRNA = N(6)-L-threonylcarbamoyladenosine(37) in tRNA + AMP + H(+). In terms of biological role, required for the formation of a threonylcarbamoyl group on adenosine at position 37 (t(6)A37) in tRNAs that read codons beginning with adenine. Is involved in the transfer of the threonylcarbamoyl moiety of threonylcarbamoyl-AMP (TC-AMP) to the N6 group of A37, together with TsaE and TsaB. TsaD likely plays a direct catalytic role in this reaction. The polypeptide is tRNA N6-adenosine threonylcarbamoyltransferase (Buchnera aphidicola subsp. Baizongia pistaciae (strain Bp)).